A 271-amino-acid chain; its full sequence is MSVEQSLLGKETEYPTTYSPSVLFPISRDAAREKYAQIEGISQGKDWWHVFELSWLNSDNIPQVAIGRITLPATSPYLIESKSLKLYFNSLNFHVFASKQELIDLVEKDLSQAANAKVSLELFDVDSLEISKPSGMCIDDLKPERLESHPDASLLKLDANEQHDADVTLYSHLLRSNCPVTGQPDWGTVFIRYTGRKHCYRSILAYIISYRQHNGFHEQCVEQIYADIWKNLQPEKLMVYATYTRRGGLDINPCRVSDLSWMPNPIRLARQ.

79–81 contacts substrate; the sequence is IES. 81–82 serves as a coordination point for NADPH; that stretch reads SK. Residue Cys178 is the Thioimide intermediate of the active site. The active-site Proton donor is the Asp185. A substrate-binding site is contributed by 217–218; it reads HE. An NADPH-binding site is contributed by 246 to 247; it reads RG.

The protein belongs to the GTP cyclohydrolase I family. QueF type 2 subfamily. As to quaternary structure, homodimer.

The protein localises to the cytoplasm. The enzyme catalyses 7-aminomethyl-7-carbaguanine + 2 NADP(+) = 7-cyano-7-deazaguanine + 2 NADPH + 3 H(+). The protein operates within tRNA modification; tRNA-queuosine biosynthesis. Its function is as follows. Catalyzes the NADPH-dependent reduction of 7-cyano-7-deazaguanine (preQ0) to 7-aminomethyl-7-deazaguanine (preQ1). This Acinetobacter baylyi (strain ATCC 33305 / BD413 / ADP1) protein is NADPH-dependent 7-cyano-7-deazaguanine reductase.